The sequence spans 676 residues: Period circadian protein (676 aa).

The segment covering 1–34 (KVSDSAYSNSCSNSQSQRSGSSKSRLSGSHSSGS) has biased composition (low complexity). The interval 1–161 (KVSDSAYSNS…AAQSFPIPSP (161 aa)) is disordered. The Nuclear localization signal signature appears at 53-66 (KRNKDKSRKKKKNK). The segment covering 53–66 (KRNKDKSRKKKKNK) has biased composition (basic residues). Over residues 108 to 120 (ELQDQQHGEDHSE) the composition is skewed to basic and acidic residues. PAS domains follow at residues 224-359 (DSFC…ATPI) and 377-483 (FAIR…RVFQ). Positions 583–676 (TNTSIAGTGG…VTLTESLLNK (94 aa)) are disordered. 26 consecutive repeat copies span residues 589–590 (GT), 592–593 (GT), 594–595 (GT), 596–597 (GT), 598–599 (GT), 600–601 (GT), 602–603 (GT), 604–605 (GT), 606–607 (GT), 608–609 (GT), 610–611 (GT), 612–613 (GT), 614–615 (GT), 616–617 (GT), 618–619 (GT), 620–621 (GT), 622–623 (GT), 624–625 (GT), 626–627 (GT), 628–629 (GT), 630–631 (GT), 632–633 (GT), 634–635 (GT), 636–637 (GT), 638–639 (GT), and 640–641 (GT). Gly residues predominate over residues 589–643 (GTGGTGTGTGTGTGTGTGTGTGTGTGTGTGTGTGTGTGTGTGTGTGTGTGTGTGN). Residues 589–645 (GTGGTGTGTGTGTGTGTGTGTGTGTGTGTGTGTGTGTGTGTGTGTGTGTGTGTGNGT) are 28 X 2 AA approximate tandem repeats of G-T. The stretch at 642–643 (GN) is one 27; approximate repeat. The stretch at 644 to 645 (GT) is repeat 28. Residues 644–654 (GTNSCTGTGTT) show a composition bias toward low complexity.

In terms of assembly, forms a heterodimer with timeless (TIM); the complex then translocates into the nucleus. Post-translationally, phosphorylated with a circadian rhythmicity, probably by the double-time protein (dbt). Phosphorylation could be implicated in the stability of per monomer and in the formation of heterodimer per-tim.

The protein localises to the nucleus. Its subcellular location is the cytoplasm. It is found in the perinuclear region. Functionally, essential for biological clock functions. Determines the period length of circadian and ultradian rhythms; an increase in PER dosage leads to shortened circadian rhythms and a decrease leads to lengthened circadian rhythms. Essential for the circadian rhythmicity of locomotor activity, eclosion behavior, and for the rhythmic component of the male courtship song that originates in the thoracic nervous system. The biological cycle depends on the rhythmic formation and nuclear localization of the TIM-PER complex. Light induces the degradation of TIM, which promotes elimination of PER. Nuclear activity of the heterodimer coordinatively regulates PER and TIM transcription through a negative feedback loop. Behaves as a negative element in circadian transcriptional loop. Does not appear to bind DNA, suggesting indirect transcriptional inhibition. This is Period circadian protein (per) from Drosophila mauritiana (Fruit fly).